A 244-amino-acid chain; its full sequence is tRNA pseudouridine synthase A (244 aa).

D52 acts as the Nucleophile in catalysis. Y110 contributes to the substrate binding site.

The protein belongs to the tRNA pseudouridine synthase TruA family. Homodimer.

It carries out the reaction uridine(38/39/40) in tRNA = pseudouridine(38/39/40) in tRNA. Its function is as follows. Formation of pseudouridine at positions 38, 39 and 40 in the anticodon stem and loop of transfer RNAs. The chain is tRNA pseudouridine synthase A from Caldicellulosiruptor saccharolyticus (strain ATCC 43494 / DSM 8903 / Tp8T 6331).